The following is a 230-amino-acid chain: Cytidylate kinase (230 aa).

Position 16–24 (16–24) interacts with ATP; it reads GPASAGKST.

Belongs to the cytidylate kinase family. Type 1 subfamily.

Its subcellular location is the cytoplasm. It carries out the reaction CMP + ATP = CDP + ADP. It catalyses the reaction dCMP + ATP = dCDP + ADP. The chain is Cytidylate kinase from Lactobacillus gasseri (strain ATCC 33323 / DSM 20243 / BCRC 14619 / CIP 102991 / JCM 1131 / KCTC 3163 / NCIMB 11718 / NCTC 13722 / AM63).